The chain runs to 1501 residues: EF-hand calcium-binding domain-containing protein 6 (1501 aa).

A disordered region spans residues 18-47 (RKFTHSRPHSSPCRVYSRNGSPNKFRSSST). Residues 35–47 (RNGSPNKFRSSST) are compositionally biased toward polar residues. EF-hand domains are found at residues 70–105 (DRGDELQKAFQLLDTGQNLTVSKSELRRIITDFLMP), 172–207 (KNIKTVMKAFELIDVNKTGLVRPQELRRVLETFCMK), 297–332 (KSYEKVEKALSAGDPCKGGYVSFNYLKIVLDTFVYQ), 403–438 (DHSASLKKALLIINTKPDGPITREEFRYILNCMAVK), 439–474 (LSDSEFKELMQMLDPGDTGVVNTSMFIDLIEENCRM), 504–539 (RNLQAFYNMLRSYDLGDTGRIGRNNFKKIMHVFCPF), and 634–669 (QQDPAFKKRFLDFSKEPNGKINVHDFKKVLEDTGMP). Residues 699–718 (EDPPMRGPETTPPQPPTPSK) form a disordered region. EF-hand domains follow at residues 741-776 (ESFRDPYSAFFKTDADRDGIINMHDLHRLLLHLLLN), 847-882 (NRWSDLSKNFLETDNEGNGILRRRDIKNALYGFDIP), 883-918 (LTPREFEKLWARYDTEGKGHITYQEFLQKLGINYSP), 964-999 (DRHQDISKAFTKTDQSKTNYISICKMQEVLEECGCS), 1069-1104 (SSQLALSTAFSALDKEDTGFVKATEFGQVLKDFCYK), 1176-1211 (SHYHAITQEFENFDTMKTNTISREEFRAICNRRVQI), and 1212-1247 (LTDEQFDRLWNEMPVNAKGRLKYPDFLSRFSSETAA). Ca(2+) is bound by residues Asp754, Asp756, Asp758, and Asp765. Thr884 carries the phosphothreonine modification. The interval 1246–1307 (AATPMATGDS…TTVIPGTPPL (62 aa)) is disordered. Composition is skewed to polar residues over residues 1270–1279 (GTRSALSLPT) and 1286–1301 (SKSQSHPCTPASTTVI). Ser1290 is modified (phosphoserine). Thr1294 and Thr1304 each carry phosphothreonine. Residues 1303–1501 (GTPPLQNCDP…YNDFLRAFLQ (199 aa)) are interaction with PARK7. EF-hand domains follow at residues 1359-1394 (ISKEECQQLIIKYDLKSNGKFAYCDFIQSCVLLLKA), 1434-1469 (HCWRPMRRTFKSYDEAGTGLLSVADFRTVLRQYSIN), and 1470-1501 (LSEEEFFHILEYYDKTLSSKISYNDFLRAFLQ). The interval 1407 to 1501 (NAHKMKEAGA…YNDFLRAFLQ (95 aa)) is interaction with AR.

Microtubule inner protein component of sperm flagellar doublet microtubules. Binds PARK7. Part of a ternary complex containing PARK7, EFCAB6/DJBP and AR. Specifically expressed in the testis.

It localises to the nucleus. The protein resides in the cytoplasm. Its subcellular location is the cytoskeleton. It is found in the flagellum axoneme. Functionally, negatively regulates the androgen receptor by recruiting histone deacetylase complex, and protein DJ-1 antagonizes this inhibition by abrogation of this complex. Microtubule inner protein (MIP) part of the dynein-decorated doublet microtubules (DMTs) in cilia axoneme, which is required for motile cilia beating. The chain is EF-hand calcium-binding domain-containing protein 6 from Homo sapiens (Human).